We begin with the raw amino-acid sequence, 78 residues long: Apolipoprotein C-I (78 aa).

The N-terminal stretch at 1 to 26 (MRLILWLPVLVVVLLMVLEGPAPAQG) is a signal peptide.

The protein belongs to the apolipoprotein C1 family.

The protein localises to the secreted. In terms of biological role, inhibitor of lipoprotein binding to the low density lipoprotein (LDL) receptor, LDL receptor-related protein, and very low density lipoprotein (VLDL) receptor. Associates with high density lipoproteins (HDL) and the triacylglycerol-rich lipoproteins in the plasma and makes up about 10% of the protein of the VLDL and 2% of that of HDL. Appears to interfere directly with fatty acid uptake and is also the major plasma inhibitor of cholesteryl ester transfer protein (CETP). Binds free fatty acids and reduces their intracellular esterification. Modulates the interaction of APOE with beta-migrating VLDL and inhibits binding of beta-VLDL to the LDL receptor-related protein. This is Apolipoprotein C-I (APOC1) from Lynx pardinus (Iberian lynx).